Here is a 73-residue protein sequence, read N- to C-terminus: Translation initiation factor IF-1 (73 aa).

The region spanning 1 to 73 (MAKKDGAIEV…TRGRIVYRYK (73 aa)) is the S1-like domain.

The protein belongs to the IF-1 family. Component of the 30S ribosomal translation pre-initiation complex which assembles on the 30S ribosome in the order IF-2 and IF-3, IF-1 and N-formylmethionyl-tRNA(fMet); mRNA recruitment can occur at any time during PIC assembly.

The protein resides in the cytoplasm. One of the essential components for the initiation of protein synthesis. Stabilizes the binding of IF-2 and IF-3 on the 30S subunit to which N-formylmethionyl-tRNA(fMet) subsequently binds. Helps modulate mRNA selection, yielding the 30S pre-initiation complex (PIC). Upon addition of the 50S ribosomal subunit IF-1, IF-2 and IF-3 are released leaving the mature 70S translation initiation complex. The chain is Translation initiation factor IF-1 from Mycolicibacterium gilvum (strain PYR-GCK) (Mycobacterium gilvum (strain PYR-GCK)).